The primary structure comprises 278 residues: Undecaprenyl-diphosphatase 1 (278 aa).

The next 6 membrane-spanning stretches (helical) occupy residues 45 to 65 (AVIG…LVYF), 95 to 115 (WWVI…KPLI), 119 to 139 (LASL…MWWA), 191 to 211 (VAAT…AGLY), 225 to 245 (PLAV…AWLL), and 256 to 276 (FVVY…TGVL).

It belongs to the UppP family.

It localises to the cell membrane. It carries out the reaction di-trans,octa-cis-undecaprenyl diphosphate + H2O = di-trans,octa-cis-undecaprenyl phosphate + phosphate + H(+). Functionally, catalyzes the dephosphorylation of undecaprenyl diphosphate (UPP). Confers resistance to bacitracin. The polypeptide is Undecaprenyl-diphosphatase 1 (Streptomyces coelicolor (strain ATCC BAA-471 / A3(2) / M145)).